A 382-amino-acid chain; its full sequence is Acetylornithine deacetylase (382 aa).

His79 is a Zn(2+) binding site. Asp81 is a catalytic residue. Asp111 contributes to the Zn(2+) binding site. The active site involves Glu143. Residues Glu144, Glu168, and His354 each contribute to the Zn(2+) site.

Belongs to the peptidase M20A family. ArgE subfamily. In terms of assembly, homodimer. Zn(2+) is required as a cofactor. Requires Co(2+) as cofactor. Glutathione serves as cofactor.

Its subcellular location is the cytoplasm. The catalysed reaction is N(2)-acetyl-L-ornithine + H2O = L-ornithine + acetate. It functions in the pathway amino-acid biosynthesis; L-arginine biosynthesis; L-ornithine from N(2)-acetyl-L-ornithine (linear): step 1/1. In terms of biological role, catalyzes the hydrolysis of the amide bond of N(2)-acetylated L-amino acids. Cleaves the acetyl group from N-acetyl-L-ornithine to form L-ornithine, an intermediate in L-arginine biosynthesis pathway, and a branchpoint in the synthesis of polyamines. This Pasteurella multocida (strain Pm70) protein is Acetylornithine deacetylase.